A 41-amino-acid polypeptide reads, in one-letter code: Large ribosomal subunit protein bL36 (41 aa).

Belongs to the bacterial ribosomal protein bL36 family.

The sequence is that of Large ribosomal subunit protein bL36 from Brucella abortus (strain S19).